We begin with the raw amino-acid sequence, 104 residues long: NADH-quinone oxidoreductase subunit K (104 aa).

Helical transmembrane passes span 4–24 (VPLSVYLVLALILFCIGLYGA), 31–51 (VIVLICIELMLNAVNINLVAF), and 64–84 (IFALFTITVAAAEAAVGLAIL).

Belongs to the complex I subunit 4L family. In terms of assembly, NDH-1 is composed of 14 different subunits. Subunits NuoA, H, J, K, L, M, N constitute the membrane sector of the complex.

It is found in the cell membrane. It catalyses the reaction a quinone + NADH + 5 H(+)(in) = a quinol + NAD(+) + 4 H(+)(out). NDH-1 shuttles electrons from NADH, via FMN and iron-sulfur (Fe-S) centers, to quinones in the respiratory chain. The immediate electron acceptor for the enzyme in this species is believed to be a menaquinone. Couples the redox reaction to proton translocation (for every two electrons transferred, four hydrogen ions are translocated across the cytoplasmic membrane), and thus conserves the redox energy in a proton gradient. The sequence is that of NADH-quinone oxidoreductase subunit K from Geobacillus sp. (strain WCH70).